The primary structure comprises 263 residues: Hydroxyethylthiazole kinase (263 aa).

Residue Met45 coordinates substrate. The ATP site is built by Arg121 and Ser167. A substrate-binding site is contributed by Gly194.

The protein belongs to the Thz kinase family. Requires Mg(2+) as cofactor.

The enzyme catalyses 5-(2-hydroxyethyl)-4-methylthiazole + ATP = 4-methyl-5-(2-phosphooxyethyl)-thiazole + ADP + H(+). It participates in cofactor biosynthesis; thiamine diphosphate biosynthesis; 4-methyl-5-(2-phosphoethyl)-thiazole from 5-(2-hydroxyethyl)-4-methylthiazole: step 1/1. In terms of biological role, catalyzes the phosphorylation of the hydroxyl group of 4-methyl-5-beta-hydroxyethylthiazole (THZ). The sequence is that of Hydroxyethylthiazole kinase from Vibrio parahaemolyticus serotype O3:K6 (strain RIMD 2210633).